Here is a 292-residue protein sequence, read N- to C-terminus: Recombination-promoting nuclease RpnA (292 aa).

It belongs to the Rpn/YhgA-like nuclease family. Requires Mg(2+) as cofactor.

Its activity is regulated as follows. Inhibited by EDTA, Zn(2+) and by Mg(2+) plus Mn(2+); stimulated by Ca(2+) in the presence of Mg(2+). Functionally, a low activity DNA endonuclease yielding 3'-hydroxyl ends, equally active on ss or dsDNA, not active on dsRNA. Shows no sequence specificity. Upon expression enhances RecA-independent DNA recombination 49-fold, concomitantly reducing viability by 88% and probably inducing DNA damage as measured by induction of the SOS repair response in RecA cells. RecA-independent DNA recombination leads to replacement of recipient genes with large segments of donor DNA rather than DNA addition to the donor strain; increased expression of RpnA leads to smaller replacement segments, suggesting this protein may play a role in generating crossover events. This chain is Recombination-promoting nuclease RpnA, found in Escherichia coli (strain K12).